A 227-amino-acid polypeptide reads, in one-letter code: UPF0173 metal-dependent hydrolase BC_4613 (227 aa).

It belongs to the UPF0173 family.

The chain is UPF0173 metal-dependent hydrolase BC_4613 from Bacillus cereus (strain ATCC 14579 / DSM 31 / CCUG 7414 / JCM 2152 / NBRC 15305 / NCIMB 9373 / NCTC 2599 / NRRL B-3711).